The sequence spans 219 residues: MNKIQHISFITKKNPLVSYERVGALQNRFVQHYLNYKANKVEQPPKPTIITSQVCPVYTLGRRESSINFTKGFPKAKVVKALRGGQTTFHGPGQILAYPIIDLKSFGLSPREYVSRLEQAIIATCKSFGIEKAHTTKNTGVWVTENDKIAAIGIHLRRNITSHGLALNVSTDLKYFNYIVGCGLYGKNTTSFKDQGVFTDLKSVEKVLVNNLDSFLMSK.

The BPL/LPL catalytic domain maps to 43–219 (QPPKPTIITS…NNLDSFLMSK (177 aa)). Residues 83 to 90 (RGGQTTFH), 151 to 153 (AIG), and 164 to 166 (GLA) each bind substrate. C182 serves as the catalytic Acyl-thioester intermediate.

It belongs to the LipB family.

It catalyses the reaction octanoyl-[ACP] + L-lysyl-[protein] = N(6)-octanoyl-L-lysyl-[protein] + holo-[ACP] + H(+). It participates in protein modification; protein lipoylation via endogenous pathway; protein N(6)-(lipoyl)lysine from octanoyl-[acyl-carrier-protein]: step 1/2. Catalyzes the transfer of endogenously produced octanoic acid from octanoyl-acyl-carrier-protein onto the lipoyl domains of lipoate-dependent enzymes. Lipoyl-ACP can also act as a substrate although octanoyl-ACP is likely to be the physiological substrate. This chain is Probable octanoyltransferase, found in Schizosaccharomyces pombe (strain 972 / ATCC 24843) (Fission yeast).